The primary structure comprises 58 residues: Small ribosomal subunit protein eS27 (58 aa).

Zn(2+) is bound by residues C10, C13, C29, and C32. The C4-type zinc finger occupies 10 to 32 (CPDCEHEQVIFDHPSTIVKCIIC).

Belongs to the eukaryotic ribosomal protein eS27 family. Part of the 30S ribosomal subunit. The cofactor is Zn(2+).

This is Small ribosomal subunit protein eS27 from Archaeoglobus fulgidus (strain ATCC 49558 / DSM 4304 / JCM 9628 / NBRC 100126 / VC-16).